A 911-amino-acid polypeptide reads, in one-letter code: Alpha-actinin-4 (911 aa).

The tract at residues 1 to 30 (MVDYHAASQSYQYGPSSAGNGAGGGGSMGD) is disordered. Positions 1 to 269 (MVDYHAASQS…YVSSFYHAFS (269 aa)) are actin-binding. The interval 12 to 26 (QYGPSSAGNGAGGGG) is interaction with VCL. A Phosphotyrosine modification is found at Tyr31. Residues 40–61 (RDLLLDPAWEKQQRKTFTAWCN) form an interaction with VCL region. 2 consecutive Calponin-homology (CH) domains span residues 50–154 (KQQR…LRFA) and 163–269 (TSAK…HAFS). The LXXLL motif motif lies at 84–88 (LMLLL). The interaction with VCL stretch occupies residues 108-126 (KINNVNKALDFIASKGVKL). Lys114 carries the post-translational modification N6-acetyllysine. The interval 177–192 (TAPYKNVNVQNFHISW) is polyphosphoinositide (PIP2)-binding. An N6-acetyllysine modification is found at Lys214. Position 249 is a phosphothreonine (Thr249). Spectrin repeat units lie at residues 293-403 (HLME…WLLN), 413-518 (HLAE…ALEK), 528-639 (QLHL…ALLE), and 649-752 (HLRR…EVEN). An N6-acetyllysine mark is found at Lys592 and Lys625. Position 696 is a phosphoserine (Ser696). Residues 736-911 (WEQLLTTIAR…STALYGESDL (176 aa)) form a mediates interaction with MICALL2 region. EF-hand domains lie at 765-800 (EQMQ…LGYD) and 806-841 (QGEA…ETTD). Asp778 is a Ca(2+) binding site. The residue at position 779 (Lys779) is an N6-acetyllysine. Ca(2+) contacts are provided by Asp780 and Glu789. Lys859 carries the N6-acetyllysine modification. Position 909 is a phosphoserine (Ser909).

The protein belongs to the alpha-actinin family. As to quaternary structure, homodimer; antiparallel. Identified in a IGF2BP1-dependent mRNP granule complex containing untranslated mRNAs. Component of the CART complex, at least composed of ACTN4, HGS/HRS, MYO5B and TRIM3. Binds TRIM3 at the N-terminus. Interacts with MAGI1. Interacts with PDLIM2. Identified in a complex with CASK, IQGAP1, MAGI2, NPHS1, SPTAN1 and SPTBN1. Interacts with MICALL2 (preferentially in opened conformation); stimulated by RAB13 activation. Interacts with PPARG and RARA. Binds to VCL; this interaction triggers VCL conformational changes. Interacts with SEPTIN14. Interacts with IGSF8.

The protein resides in the nucleus. Its subcellular location is the cytoplasm. The protein localises to the cell junction. It localises to the cytoskeleton. It is found in the stress fiber. The protein resides in the perinuclear region. F-actin cross-linking protein which is thought to anchor actin to a variety of intracellular structures. This is a bundling protein. Probably involved in vesicular trafficking via its association with the CART complex. The CART complex is necessary for efficient transferrin receptor recycling but not for EGFR degradation. Involved in tight junction assembly in epithelial cells probably through interaction with MICALL2. Links MICALL2 to the actin cytoskeleton and recruits it to the tight junctions. May also function as a transcriptional coactivator, stimulating transcription mediated by the nuclear hormone receptors PPARG and RARA. Association with IGSF8 regulates the immune synapse formation and is required for efficient T-cell activation. The polypeptide is Alpha-actinin-4 (Pongo abelii (Sumatran orangutan)).